Reading from the N-terminus, the 334-residue chain is Malate dehydrogenase, mitochondrial (334 aa).

A mitochondrion-targeting transit peptide spans 1 to 17 (MLSRVAKRAFSSTVANP). NAD(+) contacts are provided by residues 24–30 (GAGGGIG) and Asp50. The substrate site is built by Arg99 and Arg105. Residues Asn112 and 135–137 (ISN) each bind NAD(+). Substrate contacts are provided by Asn137 and Arg171. Phosphoserine is present on Ser177. The Proton acceptor role is filled by His195. Position 199 is a phosphothreonine (Thr199). Met245 serves as a coordination point for NAD(+).

Belongs to the LDH/MDH superfamily. MDH type 1 family. As to quaternary structure, homodimer.

The protein localises to the mitochondrion matrix. It catalyses the reaction (S)-malate + NAD(+) = oxaloacetate + NADH + H(+). This Saccharomyces cerevisiae (strain ATCC 204508 / S288c) (Baker's yeast) protein is Malate dehydrogenase, mitochondrial (MDH1).